Here is a 243-residue protein sequence, read N- to C-terminus: Pyridoxine 5'-phosphate synthase (243 aa).

Position 9 (Asn9) interacts with 3-amino-2-oxopropyl phosphate. A 1-deoxy-D-xylulose 5-phosphate-binding site is contributed by 11–12; sequence DH. Arg20 contacts 3-amino-2-oxopropyl phosphate. His45 (proton acceptor) is an active-site residue. Residues Arg47 and His52 each contribute to the 1-deoxy-D-xylulose 5-phosphate site. The active-site Proton acceptor is the Glu72. Thr102 lines the 1-deoxy-D-xylulose 5-phosphate pocket. The Proton donor role is filled by His193. Residues Gly194 and 215 to 216 each bind 3-amino-2-oxopropyl phosphate; that span reads GH.

Belongs to the PNP synthase family. In terms of assembly, homooctamer; tetramer of dimers.

The protein resides in the cytoplasm. The catalysed reaction is 3-amino-2-oxopropyl phosphate + 1-deoxy-D-xylulose 5-phosphate = pyridoxine 5'-phosphate + phosphate + 2 H2O + H(+). The protein operates within cofactor biosynthesis; pyridoxine 5'-phosphate biosynthesis; pyridoxine 5'-phosphate from D-erythrose 4-phosphate: step 5/5. Its function is as follows. Catalyzes the complicated ring closure reaction between the two acyclic compounds 1-deoxy-D-xylulose-5-phosphate (DXP) and 3-amino-2-oxopropyl phosphate (1-amino-acetone-3-phosphate or AAP) to form pyridoxine 5'-phosphate (PNP) and inorganic phosphate. The sequence is that of Pyridoxine 5'-phosphate synthase from Vibrio cholerae serotype O1 (strain ATCC 39315 / El Tor Inaba N16961).